A 1374-amino-acid chain; its full sequence is DNA-directed RNA polymerase subunit beta (1374 aa).

Belongs to the RNA polymerase beta chain family. The RNAP catalytic core consists of 2 alpha, 1 beta, 1 beta' and 1 omega subunit. When a sigma factor is associated with the core the holoenzyme is formed, which can initiate transcription.

It carries out the reaction RNA(n) + a ribonucleoside 5'-triphosphate = RNA(n+1) + diphosphate. DNA-dependent RNA polymerase catalyzes the transcription of DNA into RNA using the four ribonucleoside triphosphates as substrates. The protein is DNA-directed RNA polymerase subunit beta of Rhodopseudomonas palustris (strain TIE-1).